The chain runs to 314 residues: tRNA pseudouridine synthase B (314 aa).

H43 provides a ligand contact to substrate. The active-site Nucleophile is D48. The substrate site is built by Y76, Y179, and L200.

This sequence belongs to the pseudouridine synthase TruB family. Type 1 subfamily.

It catalyses the reaction uridine(55) in tRNA = pseudouridine(55) in tRNA. Its function is as follows. Responsible for synthesis of pseudouridine from uracil-55 in the psi GC loop of transfer RNAs. This is tRNA pseudouridine synthase B from Pectobacterium atrosepticum (strain SCRI 1043 / ATCC BAA-672) (Erwinia carotovora subsp. atroseptica).